A 265-amino-acid chain; its full sequence is Transcription factor BHLH062 (265 aa).

The interval 1–26 (MVPRDRVNAAAAGGGGEGRLVQSGIV) is disordered. The interval 35–48 (PKRIHKSEREKLKR) is basic motif; degenerate. In terms of domain architecture, bHLH spans 35-85 (PKRIHKSEREKLKRDKQNDLFNELGNLLEPDRQNNGKACVLGETTRILKDL). The segment at 49-85 (DKQNDLFNELGNLLEPDRQNNGKACVLGETTRILKDL) is helix-loop-helix motif. Positions 75–130 (LGETTRILKDLLSQVESLRKENSSLKNESHYVALERNELHDDNSMLRTEILELQNE) form a coiled coil. The segment at 200 to 265 (ESATSEDSEP…TNEEDRIGRS (66 aa)) is disordered. A compositionally biased stretch (basic and acidic residues) spans 210–220 (SQEHGISDHVT). Positions 245–256 (QDQQCSSGTSGT) are enriched in polar residues.

The protein belongs to the bHLH protein family. As to quaternary structure, interacts with TIFY11A/JAZ9.

The protein resides in the nucleus. Its function is as follows. Transcription factor that plays a positive role in salt stress tolerance. Interacts with TIFY11A/JAZ9 and binds to the promoter of some potassium ion transporter genes to regulate potassium homeostasis during salt stress. The polypeptide is Transcription factor BHLH062 (Oryza sativa subsp. japonica (Rice)).